A 350-amino-acid chain; its full sequence is MCRCPLEHHEVRMTSAEAIAVAGSAQEHGRPKWPPDKPQVLGQPALARVVVAALVWLLAGASMSSLNKWIFTVHGFGRPLLLSALHMLAAAVACHWGAQRPVPHSIHRRVLLLSLTFGTSMACGNVGLSTVPLDLAQLATTTTPLFTLALSALLLGRRHHPLQFAAMGPLCLGAACSLAGELRAPPAGCGFLLVATCLRGFKSVQQSALLQEERLDAVTLLYATSLPSFCLLAGAALVLEAGAAPPLPPTDSRLWACVLLSCFLSVVYNLASFSLLALTSALTVHVLGNLTVVGNLILSRLLFGSHLSALSYVGIALTLSGMFLYHNCESVASWATRRGLWNRDQPGKGL.

The next 8 helical transmembrane spans lie at 40–60 (VLGQPALARVVVAALVWLLAG), 79–99 (PLLLSALHMLAAAVACHWGAQ), 110–130 (VLLLSLTFGTSMACGNVGLST), 135–155 (LAQLATTTTPLFTLALSALLL), 218–238 (VTLLYATSLPSFCLLAGAALV), 258–278 (VLLSCFLSVVYNLASFSLLAL), 279–299 (TSALTVHVLGNLTVVGNLILS), and 301–321 (LLFGSHLSALSYVGIALTLSG). The EamA domain maps to 125–179 (NVGLSTVPLDLAQLATTTTPLFTLALSALLLGRRHHPLQFAAMGPLCLGAACSLA).

It belongs to the TPT transporter family. SLC35E subfamily.

It is found in the membrane. In terms of biological role, putative transporter. This chain is Solute carrier family 35 member E4 (Slc35e4), found in Rattus norvegicus (Rat).